The primary structure comprises 351 residues: Probable inactive tRNA-specific adenosine deaminase-like protein 3 (351 aa).

Position 1 is an N-acetylmethionine (M1). Positions 1–26 (MEPAPGLVEQPKCLEAGSPEPEPAPW) are disordered. The region spanning 171-336 (AAMQSHMERA…PDLNHRFQVF (166 aa)) is the CMP/dCMP-type deaminase domain. Residues H223, C291, and C294 each contribute to the Zn(2+) site.

The protein belongs to the cytidine and deoxycytidylate deaminase family. ADAT3 subfamily. Requires Zn(2+) as cofactor.

In Homo sapiens (Human), this protein is Probable inactive tRNA-specific adenosine deaminase-like protein 3 (ADAT3).